The primary structure comprises 438 residues: sn-glycerol-3-phosphate-binding periplasmic protein UgpB (438 aa).

The N-terminal stretch at 1 to 23 (MKPLHYTASALALGLALMGNAQA) is a signal peptide. Sn-glycerol 3-phosphate is bound by residues tyrosine 65, glutamate 89, serine 144, serine 270, glycine 307, tyrosine 346, and arginine 397.

The protein belongs to the bacterial solute-binding protein 1 family. As to quaternary structure, the complex is composed of two ATP-binding proteins (UgpC), two transmembrane proteins (UgpA and UgpE) and a solute-binding protein (UgpB).

The protein resides in the periplasm. In terms of biological role, part of the ABC transporter complex UgpBAEC involved in sn-glycerol-3-phosphate (G3P) import. Binds G3P. This chain is sn-glycerol-3-phosphate-binding periplasmic protein UgpB (ugpB), found in Shigella flexneri serotype 5b (strain 8401).